A 147-amino-acid polypeptide reads, in one-letter code: 3-hydroxyacyl-[acyl-carrier-protein] dehydratase FabZ (147 aa).

His49 is a catalytic residue.

The protein belongs to the thioester dehydratase family. FabZ subfamily.

It localises to the cytoplasm. The enzyme catalyses a (3R)-hydroxyacyl-[ACP] = a (2E)-enoyl-[ACP] + H2O. Involved in unsaturated fatty acids biosynthesis. Catalyzes the dehydration of short chain beta-hydroxyacyl-ACPs and long chain saturated and unsaturated beta-hydroxyacyl-ACPs. In Syntrophotalea carbinolica (strain DSM 2380 / NBRC 103641 / GraBd1) (Pelobacter carbinolicus), this protein is 3-hydroxyacyl-[acyl-carrier-protein] dehydratase FabZ.